The primary structure comprises 488 residues: Ribosomal protein uS12 methylthiotransferase RimO (488 aa).

The 117-residue stretch at 4 to 120 (RKVHFVSLGC…LGRVLAGDAE (117 aa)) folds into the MTTase N-terminal domain. [4Fe-4S] cluster is bound by residues C13, C49, C83, C155, C159, and C162. The region spanning 141-377 (STPGGSAYVK…MTLQRRISHK (237 aa)) is the Radical SAM core domain. The TRAM domain maps to 380–448 (AAMIGRELEV…DYDLVGELLD (69 aa)).

This sequence belongs to the methylthiotransferase family. RimO subfamily. Requires [4Fe-4S] cluster as cofactor.

It is found in the cytoplasm. It catalyses the reaction L-aspartate(89)-[ribosomal protein uS12]-hydrogen + (sulfur carrier)-SH + AH2 + 2 S-adenosyl-L-methionine = 3-methylsulfanyl-L-aspartate(89)-[ribosomal protein uS12]-hydrogen + (sulfur carrier)-H + 5'-deoxyadenosine + L-methionine + A + S-adenosyl-L-homocysteine + 2 H(+). Catalyzes the methylthiolation of an aspartic acid residue of ribosomal protein uS12. In Sorangium cellulosum (strain So ce56) (Polyangium cellulosum (strain So ce56)), this protein is Ribosomal protein uS12 methylthiotransferase RimO.